Here is a 385-residue protein sequence, read N- to C-terminus: Probable caffeine synthase MTL1 (385 aa).

The S-adenosyl-L-homocysteine site is built by Tyr18, Cys62, Asn67, Asp101, Leu102, Ser140, and Phe141. Residues Tyr158, Gln161, and Phe162 each coordinate caffeine. Residue Asn179 coordinates Mg(2+). A caffeine-binding site is contributed by Thr238. Mg(2+)-binding residues include Asp261, Phe263, and Asn264. Tyr369 contributes to the caffeine binding site.

The protein belongs to the methyltransferase superfamily. Type-7 methyltransferase family. Mg(2+) serves as cofactor.

It participates in alkaloid biosynthesis. May be involved in the biosynthesis of caffeine. The polypeptide is Probable caffeine synthase MTL1 (Coffea canephora (Robusta coffee)).